We begin with the raw amino-acid sequence, 174 residues long: Gamma-crystallin M3 (174 aa).

2 Beta/gamma crystallin 'Greek key' domains span residues 2–40 (GKII…RVES) and 41–82 (GCFV…RMVP). The connecting peptide stretch occupies residues 83–87 (QYRGP). Beta/gamma crystallin 'Greek key' domains lie at 88–128 (YRMR…HVMD) and 129–171 (GHWL…RRIM).

Belongs to the beta/gamma-crystallin family. In terms of assembly, monomer.

Crystallins are the dominant structural components of the vertebrate eye lens. In Cyprinus carpio (Common carp), this protein is Gamma-crystallin M3.